Here is a 294-residue protein sequence, read N- to C-terminus: tRNA pseudouridine synthase B (294 aa).

Aspartate 38 functions as the Nucleophile in the catalytic mechanism.

The protein belongs to the pseudouridine synthase TruB family. Type 1 subfamily.

The catalysed reaction is uridine(55) in tRNA = pseudouridine(55) in tRNA. In terms of biological role, responsible for synthesis of pseudouridine from uracil-55 in the psi GC loop of transfer RNAs. The polypeptide is tRNA pseudouridine synthase B (Clostridium perfringens (strain ATCC 13124 / DSM 756 / JCM 1290 / NCIMB 6125 / NCTC 8237 / Type A)).